The primary structure comprises 1026 residues: Multidrug resistance protein MdtC (1026 aa).

The next 11 helical transmembrane spans lie at 15 to 35, 333 to 353, 360 to 380, 387 to 407, 431 to 451, 463 to 483, 528 to 548, 853 to 873, 897 to 917, 953 to 973, and 984 to 1004; these read ILIA…LPVA, EVEE…FLFL, LIPA…MYLC, LSLM…IVVL, VGFT…PLLL, FAVT…TLTP, LVGV…IAIP, LILI…LYES, LFNA…IGIV, PIMM…LSDG, and ITIV…TPVV.

Belongs to the resistance-nodulation-cell division (RND) (TC 2.A.6) family. MdtC subfamily. Part of a tripartite efflux system composed of MdtA, MdtB and MdtC. MdtC forms a heteromultimer with MdtB.

Its subcellular location is the cell inner membrane. The chain is Multidrug resistance protein MdtC from Salmonella heidelberg (strain SL476).